The sequence spans 142 residues: Large ribosomal subunit protein uL13 (142 aa).

The protein belongs to the universal ribosomal protein uL13 family. In terms of assembly, part of the 50S ribosomal subunit.

This protein is one of the early assembly proteins of the 50S ribosomal subunit, although it is not seen to bind rRNA by itself. It is important during the early stages of 50S assembly. The protein is Large ribosomal subunit protein uL13 of Laribacter hongkongensis (strain HLHK9).